A 145-amino-acid chain; its full sequence is Large ribosomal subunit protein uL15 (145 aa).

The span at 1-13 (MNLHELKYNEGAR) shows a compositional bias: basic and acidic residues. Positions 1-56 (MNLHELKYNEGARKEKHRVGRGHAAGKGKQAGKGQSGQLKRTGSKPGFEGGQNPWY) are disordered. Residues 14–26 (KEKHRVGRGHAAG) are compositionally biased toward basic residues.

It belongs to the universal ribosomal protein uL15 family. As to quaternary structure, part of the 50S ribosomal subunit.

Its function is as follows. Binds to the 23S rRNA. The polypeptide is Large ribosomal subunit protein uL15 (Mycoplasma mobile (strain ATCC 43663 / 163K / NCTC 11711) (Mesomycoplasma mobile)).